The sequence spans 336 residues: MSGTKELYDVTLIGAGPTGLFGVFYAGMRGMKTKVIEALPEVGGQLAALYPEKDIFDVAGFPRISAKRLVEQCKEQADSANPDATYVFNQRVDKLNRLEDGTFELVTHTGERHYSKAVIITAGIGAFEPNRIPNESARQYEGKGVFYSVTNLPQFEGKRVLVIGGGDSAVDYALMVEPIAAEVTLIHRRDGFRAHEESLKKLAASRVHVKVFYELRRVEGDGNWVKKATIFDNRTGEETTIDVDCVIIGTGFKASLGSMLEWGLEIENKRQIVVNSKGETNIPGVYAAGDICWYPGKIRLIATGFGEVATAVNNAKAFIDPGSAAFPGHSSEQRNK.

FAD contacts are provided by T18, E37, Q45, Y50, V92, F127, D290, and S331.

The protein belongs to the ferredoxin--NADP reductase type 2 family. As to quaternary structure, homodimer. FAD is required as a cofactor.

It carries out the reaction 2 reduced [2Fe-2S]-[ferredoxin] + NADP(+) + H(+) = 2 oxidized [2Fe-2S]-[ferredoxin] + NADPH. This is Ferredoxin--NADP reductase from Symbiobacterium thermophilum (strain DSM 24528 / JCM 14929 / IAM 14863 / T).